Here is a 573-residue protein sequence, read N- to C-terminus: Glutathione hydrolase 5 proenzyme (573 aa).

The Cytoplasmic segment spans residues 1-8; the sequence is MAWGHRAT. The chain crosses the membrane as a helical; Signal-anchor for type II membrane protein span at residues 9-29; sequence VCLVLLGVGLGLVIVVLAAVL. The Extracellular segment spans residues 30–573; the sequence is SPRQASCGPG…LRKAGKASGY (544 aa). An N-linked (GlcNAc...) asparagine glycan is attached at asparagine 98. Arginine 110 serves as a coordination point for L-glutamate. N-linked (GlcNAc...) asparagine glycosylation is found at asparagine 185, asparagine 204, asparagine 277, asparagine 303, asparagine 347, and asparagine 378. Threonine 389 serves as the catalytic Nucleophile. L-glutamate is bound by residues threonine 407, glutamate 428, and 454–455; that span reads SS.

Belongs to the gamma-glutamyltransferase family. As to quaternary structure, heterodimer composed of the light and heavy chains. The active site is located in the light chain. Post-translationally, cleaved by autocatalysis into a large and a small subunit. In terms of processing, glycosylated. As to expression, very low level of expression. Detected in spleen lymphocytes, medullary and paracortical thymic lymphocytes, lung interstitial cells, bronchial epithelium, proximal tubules in kidney, crypt cells in small intestine, neurons in brain stem and cerebral cortex and in Purkinje cells. In terms of tissue distribution, very low expression.

It localises to the membrane. The enzyme catalyses glutathione + H2O = L-cysteinylglycine + L-glutamate. It carries out the reaction an S-substituted glutathione + H2O = an S-substituted L-cysteinylglycine + L-glutamate. It catalyses the reaction leukotriene C4 + H2O = leukotriene D4 + L-glutamate. The catalysed reaction is S-[(2E,6E,10E)-geranylgeranyl]-L-glutathione + H2O = S-[(2E,6E,10E)-geranylgeranyl]-L-cysteinylglycine + L-glutamate. The enzyme catalyses an N-terminal (5-L-glutamyl)-[peptide] + an alpha-amino acid = 5-L-glutamyl amino acid + an N-terminal L-alpha-aminoacyl-[peptide]. It functions in the pathway lipid metabolism; leukotriene D4 biosynthesis. The protein operates within sulfur metabolism; glutathione metabolism. With respect to regulation, inhibited by serine-borate. Its function is as follows. Cleaves the gamma-glutamyl bond of extracellular glutathione tripeptide (gamma-Glu-Cys-Gly) and certain glutathione conjugates. Hydrolyzes glutathione releasing L-Glu and Cys-Gly dipeptide which is further metabolized to maintain extracellular cysteine levels but also to provide cysteine necessary for intracellular glutathione synthesis. Among glutathione-S-conjugates metabolizes leukotriene C4 (LTC4) and S-geranylgeranyl-glutathione (GGG), but is inactive toward gamma-glutamyl leucine. Converts extracellular LTC4 to LTD4 during acute inflammatory response. Acts as a negative regulator of GGG bioactivity. GGT5 (via GGG catabolism) and ABCC1 (via extracellular transport) establish GGG gradients within lymphoid tissues to position P2RY8-positive lymphocytes at germinal centers in lymphoid follicles and restrict their chemotactic transmigration from blood vessels to bone marrow parenchyma. The transpeptidation reaction, i.e. the transfer of gamma-glutamyl moiety to an acceptor molecule to yield a new gamma-glutamyl compound requires high concentration of dipeptide acceptor and is considered nonphysiological. This chain is Glutathione hydrolase 5 proenzyme (Ggt5), found in Mus musculus (Mouse).